Reading from the N-terminus, the 706-residue chain is Polyribonucleotide nucleotidyltransferase (706 aa).

The Mg(2+) site is built by Asp487 and Asp493. Positions 554 to 613 (PRIHTMKISSDKIKDVIGKGGAVIRALCEETGTTIEIEDDGTIKIAATEGAAAKEAIRRI) constitute a KH domain. The 69-residue stretch at 623 to 691 (GRIYQGKVAR…RQGRVRLSMK (69 aa)) folds into the S1 motif domain.

It belongs to the polyribonucleotide nucleotidyltransferase family. Component of the RNA degradosome, which is a multiprotein complex involved in RNA processing and mRNA degradation. It depends on Mg(2+) as a cofactor.

Its subcellular location is the cytoplasm. The catalysed reaction is RNA(n+1) + phosphate = RNA(n) + a ribonucleoside 5'-diphosphate. In terms of biological role, involved in mRNA degradation. Catalyzes the phosphorolysis of single-stranded polyribonucleotides processively in the 3'- to 5'-direction. In Vibrio atlanticus (strain LGP32) (Vibrio splendidus (strain Mel32)), this protein is Polyribonucleotide nucleotidyltransferase.